Here is a 149-residue protein sequence, read N- to C-terminus: Large ribosomal subunit protein bL9 (149 aa).

The protein belongs to the bacterial ribosomal protein bL9 family.

Functionally, binds to the 23S rRNA. The sequence is that of Large ribosomal subunit protein bL9 from Legionella pneumophila subsp. pneumophila (strain Philadelphia 1 / ATCC 33152 / DSM 7513).